A 321-amino-acid chain; its full sequence is Cytochrome c biogenesis protein CcsA (321 aa).

The next 7 helical transmembrane spans lie at 17-37 (IISIVISVHLIKFLVPEIIGL), 41-61 (LEKGIITTSFCITGLLIIRWV), 68-88 (LSNLYESLMFLSWGFSTIHIF), 143-163 (MLLSYGALLCGSLLSVSLLVI), 227-247 (IINLGFTLLTIGILSGAVWAN), 260-277 (ETWAFITWTIFATYLHTR), and 288-308 (AIVASIGFLIIWICYFGVNLL).

Belongs to the CcmF/CycK/Ccl1/NrfE/CcsA family. As to quaternary structure, may interact with Ccs1.

The protein localises to the plastid. It localises to the chloroplast thylakoid membrane. Required during biogenesis of c-type cytochromes (cytochrome c6 and cytochrome f) at the step of heme attachment. This is Cytochrome c biogenesis protein CcsA from Piper cenocladum (Ant piper).